Here is a 708-residue protein sequence, read N- to C-terminus: MRERIWAPPLLLLLPLLLPPPLWGGPPDSPRRELELEPGPLQPFDLLYASGAAAYYSGDYERAVRDLEAALRSHRRLREIRTRCARHCAARHPLPPPPPGEGPGAELPLFRSLLGRARCYRSCETQRLGGPASRHRVSEDVRSDFQRRVPYNYLQRAYIKLNQLEKAVEAAHTFFVANPEHMEMQQNIENYRATAGVEALQLVDREAKPHMESYNAGVKHYEADDFEMAIRHFEQALREYFVEDTECRTLCEGPQRFEEYEYLGYKAGLYEAIADHYMQVLVCQHECVRELATRPGRLSPIENFLPLHYDYLQFAYYRVGEYVKALECAKAYLLCHPDDEDVLDNVDYYESLLDDSIDPASIEAREDLTMFVKRHKLESELIKSAAEGLGFSYTEPNYWIRYGGRQDENRVPSGVNVEGAEVHGFSMGKKLSPKIDRDLREGGPLLYENITFVYNSEQLNGTQRVLLDNVLSEEQCRELHSVASGIMLVGDGYRGKTSPHTPNEKFEGATVLKALKSGYEGRVPLKSARLFYDISEKARRIVESYFMLNSTLYFSYTHMVCRTALSGQQDRRNDLSHPIHADNCLLDPEANECWKEPPAYTFRDYSALLYMNDDFEGGEFIFTEMDAKTVTASIKPKCGRMISFSSGGENPHGVKAVTKGKRCAVALWFTLDPLYRELERIQADEVIAILDQEQQGKHELNINPKDEL.

Positions 1 to 24 (MRERIWAPPLLLLLPLLLPPPLWG) are cleaved as a signal peptide. TPR repeat units follow at residues 44 to 77 (FDLL…HRRL), 148 to 181 (RVPY…NPEH), 210 to 243 (HMES…YFVE), and 306 to 339 (PLHY…HPDD). Residues N449 and N549 are each glycosylated (N-linked (GlcNAc...) asparagine). One can recognise a Fe2OG dioxygenase domain in the interval 557-671 (THMVCRTALS…RCAVALWFTL (115 aa)). Positions 580, 582, and 652 each coordinate Fe cation. R662 is an active-site residue. Residues 705–708 (KDEL) carry the Prevents secretion from ER motif.

The protein belongs to the leprecan family. Fe cation serves as cofactor. It depends on L-ascorbate as a cofactor. In terms of tissue distribution, expression localized to the epithelia of bile ducts and to the sacroplasm of heart muscle and skeletal muscle. In the pancreas, localized to a subpopulation of Langerhans islet cells and in the salivary gland, expressed in acinar cells (at protein level). Expressed in adult heart, placenta, lung, liver, skeletal muscle and kidney. Detected in fetal heart, spleen, lung, liver skeletal muscle and kidney.

It localises to the endoplasmic reticulum. The protein localises to the sarcoplasmic reticulum. It is found in the golgi apparatus. It catalyses the reaction L-prolyl-[collagen] + 2-oxoglutarate + O2 = trans-3-hydroxy-L-prolyl-[collagen] + succinate + CO2. Its activity is regulated as follows. Inhibited by pyridine 2,4-dicarboxylate, an analog of 2-oxoglutarate. Prolyl 3-hydroxylase that catalyzes the post-translational formation of 3-hydroxyproline on collagens. Contributes to proline 3-hydroxylation of collagen COL4A1 and COL1A1 in tendons, the eye sclera and in the eye lens capsule. Has high activity with the type IV collagen COL4A1, and lower activity with COL1A1. Catalyzes hydroxylation of the first Pro in Gly-Pro-Hyp sequences where Hyp is 4-hydroxyproline. Has no activity on substrates that lack 4-hydroxyproline in the third position. The chain is Prolyl 3-hydroxylase 2 from Homo sapiens (Human).